The chain runs to 236 residues: Small ribosomal subunit protein uS2 (236 aa).

This sequence belongs to the universal ribosomal protein uS2 family.

The polypeptide is Small ribosomal subunit protein uS2 (Brevibacillus brevis (strain 47 / JCM 6285 / NBRC 100599)).